We begin with the raw amino-acid sequence, 243 residues long: Aspartate/glutamate leucyltransferase (243 aa).

The protein belongs to the R-transferase family. Bpt subfamily.

The protein resides in the cytoplasm. It carries out the reaction N-terminal L-glutamyl-[protein] + L-leucyl-tRNA(Leu) = N-terminal L-leucyl-L-glutamyl-[protein] + tRNA(Leu) + H(+). It catalyses the reaction N-terminal L-aspartyl-[protein] + L-leucyl-tRNA(Leu) = N-terminal L-leucyl-L-aspartyl-[protein] + tRNA(Leu) + H(+). Its function is as follows. Functions in the N-end rule pathway of protein degradation where it conjugates Leu from its aminoacyl-tRNA to the N-termini of proteins containing an N-terminal aspartate or glutamate. The chain is Aspartate/glutamate leucyltransferase from Teredinibacter turnerae (strain ATCC 39867 / T7901).